A 166-amino-acid chain; its full sequence is Eukaryotic translation initiation factor 5A (166 aa).

A Hypusine modification is found at Lys52. Residues 99–125 (DREDPSKPAHLSLMDDEGETRDNLDMP) are disordered.

Belongs to the eIF-5A family. Post-translationally, lys-52 undergoes hypusination, a unique post-translational modification that consists in the addition of a butylamino group from spermidine to lysine side chain, leading to the formation of the unusual amino acid hypusine. eIF-5As are the only known proteins to undergo this modification, which is essential for their function. Hypusination is mediated by the consecutive action of deoxyhypusine synthase DHSc and deoxyhypusine hydroxylase DOHH.

The protein localises to the cytoplasm. Translation factor that promotes translation elongation and termination, particularly upon ribosome stalling at specific amino acid sequence contexts. Binds between the exit (E) and peptidyl (P) site of the ribosome and promotes rescue of stalled ribosome: specifically required for efficient translation of polyproline-containing peptides as well as other motifs that stall the ribosome. Acts as a ribosome quality control (RQC) cofactor by joining the RQC complex to facilitate peptidyl transfer during CAT tailing step. Required for cell growth during both bloodstream (BF) and insect procyclic (PF) life cycle stages and for survival of the bloodstream form. The chain is Eukaryotic translation initiation factor 5A from Trypanosoma brucei brucei (strain 927/4 GUTat10.1).